Consider the following 251-residue polypeptide: Isoprenyl transferase (251 aa).

Residue Asp31 is part of the active site. A Mg(2+)-binding site is contributed by Asp31. Residues 32 to 35 (GNGR), Trp36, Arg44, His48, and 76 to 78 (STE) contribute to the substrate site. The active-site Proton acceptor is the Asn79. Substrate is bound by residues Trp80, Arg82, Arg199, and 205–207 (RIS). Glu218 provides a ligand contact to Mg(2+).

It belongs to the UPP synthase family. As to quaternary structure, homodimer. Requires Mg(2+) as cofactor.

In terms of biological role, catalyzes the condensation of isopentenyl diphosphate (IPP) with allylic pyrophosphates generating different type of terpenoids. The sequence is that of Isoprenyl transferase from Thermosynechococcus vestitus (strain NIES-2133 / IAM M-273 / BP-1).